The sequence spans 215 residues: Large ribosomal subunit protein uL3 (215 aa).

Gln-156 is modified (N5-methylglutamine).

The protein belongs to the universal ribosomal protein uL3 family. As to quaternary structure, part of the 50S ribosomal subunit. Forms a cluster with proteins L14 and L19. Post-translationally, methylated by PrmB.

In terms of biological role, one of the primary rRNA binding proteins, it binds directly near the 3'-end of the 23S rRNA, where it nucleates assembly of the 50S subunit. In Xylella fastidiosa (strain M23), this protein is Large ribosomal subunit protein uL3.